The sequence spans 311 residues: Olfactory receptor 4K1 (311 aa).

Topologically, residues 1-25 are extracellular; that stretch reads MAHTNESMVSEFVLLGLSNSWGLQL. Asn5 carries an N-linked (GlcNAc...) asparagine glycan. A helical transmembrane segment spans residues 26-49; it reads FFFAIFSIVYVTSVLGNVLIIVII. Over 50-57 the chain is Cytoplasmic; sequence SFDSHLNS. The chain crosses the membrane as a helical span at residues 58-79; that stretch reads PMYFLLSNLSFIDICQSNFATP. Residues 80–100 lie on the Extracellular side of the membrane; the sequence is KMLVDFFIERKTISFEGCMAQ. A disulfide bridge links Cys97 with Cys189. A helical transmembrane segment spans residues 101–120; that stretch reads IFVLHSFVGSEMMLLVAMAY. Residues 121 to 139 lie on the Cytoplasmic side of the membrane; it reads DRFIAICKPLHYSTIMNRR. Residues 140-158 form a helical membrane-spanning segment; that stretch reads LCVIFVSISWAVGVLHSVS. Residues 159-195 lie on the Extracellular side of the membrane; it reads HLAFTVDLPFCGPNEVDSFFCDLPLVIELACMDTYEM. Residues 196 to 219 form a helical membrane-spanning segment; that stretch reads EIMTLTNSGLISLSCFLALIISYT. The Cytoplasmic segment spans residues 220-235; it reads IILIGVRCRSSSGSSK. Residues 236-258 form a helical membrane-spanning segment; it reads ALSTLTAHITVVILFFGPCIYFY. Residues 259–269 are Extracellular-facing; that stretch reads IWPFSRLPVDK. Residues 270 to 289 form a helical membrane-spanning segment; sequence FLSVFYTVCTPLLNPIIYSL. Over 290–311 the chain is Cytoplasmic; it reads RNEDVKAAMWKLRNRHVNSWKN.

The protein belongs to the G-protein coupled receptor 1 family.

Its subcellular location is the cell membrane. Functionally, odorant receptor. In Homo sapiens (Human), this protein is Olfactory receptor 4K1 (OR4K1).